Here is an 87-residue protein sequence, read N- to C-terminus: MKTFDSLYEELLNRAQTRPEGSGTVAALDKGIHHLGKKVIEEAGEVWIAAEYETDEELAGEISQLIYWTQVIMVARGLKPEDIYKNL.

This sequence belongs to the PRA-PH family.

It is found in the cytoplasm. It carries out the reaction 1-(5-phospho-beta-D-ribosyl)-ATP + H2O = 1-(5-phospho-beta-D-ribosyl)-5'-AMP + diphosphate + H(+). Its pathway is amino-acid biosynthesis; L-histidine biosynthesis; L-histidine from 5-phospho-alpha-D-ribose 1-diphosphate: step 2/9. This is Phosphoribosyl-ATP pyrophosphatase (hisE) from Corynebacterium glutamicum (strain ATCC 13032 / DSM 20300 / JCM 1318 / BCRC 11384 / CCUG 27702 / LMG 3730 / NBRC 12168 / NCIMB 10025 / NRRL B-2784 / 534).